Consider the following 312-residue polypeptide: Acetyl-coenzyme A carboxylase carboxyl transferase subunit beta (312 aa).

In terms of domain architecture, CoA carboxyltransferase N-terminal spans 24–293 (LWIKCPDSGQ…VEHAKPAPQL (270 aa)). Residues 286–312 (HAKPAPQLPPPAKPAETAEAPAVATSA) are disordered. Over residues 299 to 312 (PAETAEAPAVATSA) the composition is skewed to low complexity.

It belongs to the AccD/PCCB family. Acetyl-CoA carboxylase is a heterohexamer composed of biotin carboxyl carrier protein (AccB), biotin carboxylase (AccC) and two subunits each of ACCase subunit alpha (AccA) and ACCase subunit beta (AccD).

It localises to the cytoplasm. It carries out the reaction N(6)-carboxybiotinyl-L-lysyl-[protein] + acetyl-CoA = N(6)-biotinyl-L-lysyl-[protein] + malonyl-CoA. It functions in the pathway lipid metabolism; malonyl-CoA biosynthesis; malonyl-CoA from acetyl-CoA: step 1/1. Its function is as follows. Component of the acetyl coenzyme A carboxylase (ACC) complex. Biotin carboxylase (BC) catalyzes the carboxylation of biotin on its carrier protein (BCCP) and then the CO(2) group is transferred by the transcarboxylase to acetyl-CoA to form malonyl-CoA. The polypeptide is Acetyl-coenzyme A carboxylase carboxyl transferase subunit beta (Bradyrhizobium sp. (strain ORS 278)).